The following is a 714-amino-acid chain: Glycine--tRNA ligase beta subunit (714 aa).

This sequence belongs to the class-II aminoacyl-tRNA synthetase family. As to quaternary structure, tetramer of two alpha and two beta subunits.

The protein resides in the cytoplasm. The enzyme catalyses tRNA(Gly) + glycine + ATP = glycyl-tRNA(Gly) + AMP + diphosphate. The protein is Glycine--tRNA ligase beta subunit of Rhodospirillum centenum (strain ATCC 51521 / SW).